The primary structure comprises 152 residues: 3-hydroxyacyl-[acyl-carrier-protein] dehydratase FabZ (152 aa).

Residue His-57 is part of the active site.

Belongs to the thioester dehydratase family. FabZ subfamily.

It localises to the cytoplasm. The catalysed reaction is a (3R)-hydroxyacyl-[ACP] = a (2E)-enoyl-[ACP] + H2O. Involved in unsaturated fatty acids biosynthesis. Catalyzes the dehydration of short chain beta-hydroxyacyl-ACPs and long chain saturated and unsaturated beta-hydroxyacyl-ACPs. The chain is 3-hydroxyacyl-[acyl-carrier-protein] dehydratase FabZ from Pasteurella multocida (strain Pm70).